The chain runs to 373 residues: Peptide chain release factor 2 (373 aa).

The residue at position 251 (Gln-251) is an N5-methylglutamine.

Belongs to the prokaryotic/mitochondrial release factor family. Methylated by PrmC. Methylation increases the termination efficiency of RF2.

Its subcellular location is the cytoplasm. In terms of biological role, peptide chain release factor 2 directs the termination of translation in response to the peptide chain termination codons UGA and UAA. In Salinispora tropica (strain ATCC BAA-916 / DSM 44818 / JCM 13857 / NBRC 105044 / CNB-440), this protein is Peptide chain release factor 2.